Reading from the N-terminus, the 163-residue chain is MLLAIKDFFNSLLLKELFKGMALTGRYLFARKVTVQFPEEKTPISPRFRGLHALRRYPNGEERCIACKLCEAVCPALAITIESDVRADGTRRTTRYDIDLTKCIFCGFCEEACPVDAVVETPILEYHGEKRGDLYFTKDMLLAVGDRYEPQIAAAKAADAKYR.

4Fe-4S ferredoxin-type domains lie at 54 to 84 (LRRY…IESD) and 94 to 123 (TRYD…ETPI). [4Fe-4S] cluster contacts are provided by cysteine 64, cysteine 67, cysteine 70, cysteine 74, cysteine 103, cysteine 106, cysteine 109, and cysteine 113.

The protein belongs to the complex I 23 kDa subunit family. As to quaternary structure, NDH-1 is composed of 14 different subunits. Subunits NuoA, H, J, K, L, M, N constitute the membrane sector of the complex. The cofactor is [4Fe-4S] cluster.

It localises to the cell inner membrane. It carries out the reaction a quinone + NADH + 5 H(+)(in) = a quinol + NAD(+) + 4 H(+)(out). Functionally, NDH-1 shuttles electrons from NADH, via FMN and iron-sulfur (Fe-S) centers, to quinones in the respiratory chain. The immediate electron acceptor for the enzyme in this species is believed to be ubiquinone. Couples the redox reaction to proton translocation (for every two electrons transferred, four hydrogen ions are translocated across the cytoplasmic membrane), and thus conserves the redox energy in a proton gradient. The protein is NADH-quinone oxidoreductase subunit I of Cupriavidus pinatubonensis (strain JMP 134 / LMG 1197) (Cupriavidus necator (strain JMP 134)).